The sequence spans 843 residues: Envelope glycoprotein gp160 (843 aa).

An N-terminal signal peptide occupies residues methionine 1 to aspartate 33. An N-linked (GlcNAc...) asparagine; by host glycan is attached at asparagine 30. Topologically, residues aspartate 34–isoleucine 671 are extracellular. Cysteine 55 and cysteine 75 form a disulfide bridge. N-linked (GlcNAc...) asparagine; by host glycans are attached at residues asparagine 89, asparagine 131, asparagine 136, asparagine 143, asparagine 156, asparagine 160, asparagine 186, asparagine 197, asparagine 234, asparagine 262, asparagine 276, asparagine 289, asparagine 301, asparagine 333, asparagine 338, asparagine 343, asparagine 353, and asparagine 359. Cystine bridges form between cysteine 120–cysteine 205, cysteine 127–cysteine 196, cysteine 132–cysteine 157, cysteine 218–cysteine 247, and cysteine 228–cysteine 239. The V1 stretch occupies residues cysteine 132–asparagine 156. Residues cysteine 157 to cysteine 196 form a V2 region. The segment at cysteine 296–tyrosine 329 is V3. A disulfide bridge connects residues cysteine 296 and cysteine 330. The tract at residues serine 361–histidine 371 is CD4-binding loop. A disulfide bond links cysteine 375 and cysteine 432. The interval tyrosine 382–cysteine 405 is V4. Residues asparagine 383, asparagine 389, asparagine 395, asparagine 400, and asparagine 435 are each glycosylated (N-linked (GlcNAc...) asparagine; by host). V5 stretches follow at residues aspartate 448–isoleucine 458 and aspartate 450–isoleucine 458. Positions alanine 499–alanine 519 are fusion peptide. An immunosuppression region spans residues lysine 561 to leucine 579. Cysteine 585 and cysteine 591 are oxidised to a cystine. N-linked (GlcNAc...) asparagine; by host glycosylation is found at asparagine 598, asparagine 603, asparagine 612, and asparagine 624. Residues lysine 620 to aspartate 654 adopt a coiled-coil conformation. Residues alanine 649 to lysine 670 are MPER; binding to GalCer. The chain crosses the membrane as a helical span at residues phenylalanine 672–valine 692. Over asparagine 693 to leucine 843 the chain is Cytoplasmic. The YXXL motif; contains endocytosis signal signature appears at tyrosine 699–leucine 702. The tract at residues proline 709–arginine 731 is disordered. The S-palmitoyl cysteine; by host moiety is linked to residue cysteine 751. Residues leucine 842 to leucine 843 carry the Di-leucine internalization motif motif.

The protein belongs to the HIV-1 env protein family. In terms of assembly, the mature envelope protein (Env) consists of a homotrimer of non-covalently associated gp120-gp41 heterodimers. The resulting complex protrudes from the virus surface as a spike. There seems to be as few as 10 spikes on the average virion. Interacts with host CD4, CCR5 and CXCR4. Gp120 also interacts with the C-type lectins CD209/DC-SIGN and CLEC4M/DC-SIGNR (collectively referred to as DC-SIGN(R)). Gp120 and gp41 interact with GalCer. Gp120 interacts with host ITGA4/ITGB7 complex; on CD4+ T-cells, this interaction results in rapid activation of integrin ITGAL/LFA-1, which facilitates efficient cell-to-cell spreading of HIV-1. Gp120 interacts with cell-associated heparan sulfate; this interaction increases virus infectivity on permissive cells and may be involved in infection of CD4- cells. The mature envelope protein (Env) consists of a homotrimer of non-covalently associated gp120-gp41 heterodimers. The resulting complex protrudes from the virus surface as a spike. There seems to be as few as 10 spikes on the average virion. Post-translationally, highly glycosylated by host. The high number of glycan on the protein is reffered to as 'glycan shield' because it contributes to hide protein sequence from adaptive immune system. Palmitoylation of the transmembrane protein and of Env polyprotein (prior to its proteolytic cleavage) is essential for their association with host cell membrane lipid rafts. Palmitoylation is therefore required for envelope trafficking to classical lipid rafts, but not for viral replication. In terms of processing, specific enzymatic cleavages in vivo yield mature proteins. Envelope glycoproteins are synthesized as an inactive precursor that is heavily N-glycosylated and processed likely by host cell furin in the Golgi to yield the mature SU and TM proteins. The cleavage site between SU and TM requires the minimal sequence [KR]-X-[KR]-R. About 2 of the 9 disulfide bonds of gp41 are reduced by P4HB/PDI, following binding to CD4 receptor.

It localises to the virion membrane. The protein resides in the host cell membrane. It is found in the host endosome membrane. Its function is as follows. Oligomerizes in the host endoplasmic reticulum into predominantly trimers. In a second time, gp160 transits in the host Golgi, where glycosylation is completed. The precursor is then proteolytically cleaved in the trans-Golgi and thereby activated by cellular furin or furin-like proteases to produce gp120 and gp41. Functionally, attaches the virus to the host lymphoid cell by binding to the primary receptor CD4. This interaction induces a structural rearrangement creating a high affinity binding site for a chemokine coreceptor like CXCR4 and/or CCR5. Acts as a ligand for CD209/DC-SIGN and CLEC4M/DC-SIGNR, which are respectively found on dendritic cells (DCs), and on endothelial cells of liver sinusoids and lymph node sinuses. These interactions allow capture of viral particles at mucosal surfaces by these cells and subsequent transmission to permissive cells. HIV subverts the migration properties of dendritic cells to gain access to CD4+ T-cells in lymph nodes. Virus transmission to permissive T-cells occurs either in trans (without DCs infection, through viral capture and transmission), or in cis (following DCs productive infection, through the usual CD4-gp120 interaction), thereby inducing a robust infection. In trans infection, bound virions remain infectious over days and it is proposed that they are not degraded, but protected in non-lysosomal acidic organelles within the DCs close to the cell membrane thus contributing to the viral infectious potential during DCs' migration from the periphery to the lymphoid tissues. On arrival at lymphoid tissues, intact virions recycle back to DCs' cell surface allowing virus transmission to CD4+ T-cells. In terms of biological role, acts as a class I viral fusion protein. Under the current model, the protein has at least 3 conformational states: pre-fusion native state, pre-hairpin intermediate state, and post-fusion hairpin state. During fusion of viral and target intracellular membranes, the coiled coil regions (heptad repeats) assume a trimer-of-hairpins structure, positioning the fusion peptide in close proximity to the C-terminal region of the ectodomain. The formation of this structure appears to drive apposition and subsequent fusion of viral and target cell membranes. Complete fusion occurs in host cell endosomes and is dynamin-dependent, however some lipid transfer might occur at the plasma membrane. The virus undergoes clathrin-dependent internalization long before endosomal fusion, thus minimizing the surface exposure of conserved viral epitopes during fusion and reducing the efficacy of inhibitors targeting these epitopes. Membranes fusion leads to delivery of the nucleocapsid into the cytoplasm. The sequence is that of Envelope glycoprotein gp160 from Homo sapiens (Human).